The primary structure comprises 475 residues: tRNA modification GTPase MnmE (475 aa).

(6S)-5-formyl-5,6,7,8-tetrahydrofolate is bound by residues R24, E81, and K124. One can recognise a TrmE-type G domain in the interval 220–397; that stretch reads GLSVVLAGQP…MRSELLRLIG (178 aa). N230 is a K(+) binding site. Residues 230–235, 249–255, 274–277, and 378–380 each bind GTP; these read NVGKSS, TPIAGTT, DTAG, and SAR. Residue S234 participates in Mg(2+) binding. K(+) contacts are provided by T249, I251, and T254. T255 contacts Mg(2+). A (6S)-5-formyl-5,6,7,8-tetrahydrofolate-binding site is contributed by K475.

This sequence belongs to the TRAFAC class TrmE-Era-EngA-EngB-Septin-like GTPase superfamily. TrmE GTPase family. In terms of assembly, homodimer. Heterotetramer of two MnmE and two MnmG subunits. K(+) serves as cofactor.

It is found in the cytoplasm. Exhibits a very high intrinsic GTPase hydrolysis rate. Involved in the addition of a carboxymethylaminomethyl (cmnm) group at the wobble position (U34) of certain tRNAs, forming tRNA-cmnm(5)s(2)U34. The sequence is that of tRNA modification GTPase MnmE from Cupriavidus metallidurans (strain ATCC 43123 / DSM 2839 / NBRC 102507 / CH34) (Ralstonia metallidurans).